The primary structure comprises 162 residues: Nucleotide-binding protein A2cp1_0112 (162 aa).

The protein belongs to the YajQ family.

Nucleotide-binding protein. The chain is Nucleotide-binding protein A2cp1_0112 from Anaeromyxobacter dehalogenans (strain 2CP-1 / ATCC BAA-258).